Reading from the N-terminus, the 199-residue chain is Glycerol-3-phosphate acyltransferase (199 aa).

A run of 5 helical transmembrane segments spans residues 4–24 (LVSV…FLMG), 51–71 (WAAL…AYLG), 77–97 (EWGF…PVWL), 111–131 (VMLL…ALAV), and 152–172 (LFLL…AVVI).

This sequence belongs to the PlsY family. In terms of assembly, probably interacts with PlsX.

It is found in the cell membrane. The catalysed reaction is an acyl phosphate + sn-glycerol 3-phosphate = a 1-acyl-sn-glycero-3-phosphate + phosphate. It participates in lipid metabolism; phospholipid metabolism. Catalyzes the transfer of an acyl group from acyl-phosphate (acyl-PO(4)) to glycerol-3-phosphate (G3P) to form lysophosphatidic acid (LPA). This enzyme utilizes acyl-phosphate as fatty acyl donor, but not acyl-CoA or acyl-ACP. The protein is Glycerol-3-phosphate acyltransferase of Symbiobacterium thermophilum (strain DSM 24528 / JCM 14929 / IAM 14863 / T).